Here is a 326-residue protein sequence, read N- to C-terminus: Polycomb complex protein BMI-1 (326 aa).

An RING-type zinc finger spans residues 18-57 (CVLCGGYFIDATTIIECLHSFCKTCIVRYLETSKYCPICD). Residues 81 to 95 (KLVPGLFKNEMKRRR) carry the Nuclear localization signal motif. The interval 162 to 182 (RYLRCPAAMTVMHLRKFLRSK) is interaction with PHC2. An interaction with E4F1 region spans residues 164-228 (LRCPAAMTVM…GPLPLKYRVR (65 aa)). The segment at 236 to 326 (IGHQREGLSN…INGSSATSSG (91 aa)) is disordered. A compositionally biased stretch (low complexity) spans 265 to 278 (LPSTSSCLPSPSTP). Residues 279-310 (VQSPHPQFPHISSTMNGTSSSPGSNHQSSFTN) are compositionally biased toward polar residues. A compositionally biased stretch (low complexity) spans 315–326 (SSINGSSATSSG).

In terms of assembly, component of a PRC1-like complex.

The protein resides in the nucleus. The protein localises to the cytoplasm. Functionally, component of a Polycomb group (PcG) multiprotein PRC1-like complex, a complex class required to maintain the transcriptionally repressive state of many genes, including Hox genes, throughout development. PcG PRC1 complex acts via chromatin remodeling and modification of histones; it mediates monoubiquitination of histone H2A 'Lys-119', rendering chromatin heritably changed in its expressibility. In the PRC1-like complex, regulates the E3 ubiquitin-protein ligase activity of RNF2/RING2. In Gallus gallus (Chicken), this protein is Polycomb complex protein BMI-1 (BMI1).